The chain runs to 367 residues: Phosphoribosylaminoimidazole-succinocarboxamide synthase (367 aa).

Belongs to the SAICAR synthetase family.

It catalyses the reaction 5-amino-1-(5-phospho-D-ribosyl)imidazole-4-carboxylate + L-aspartate + ATP = (2S)-2-[5-amino-1-(5-phospho-beta-D-ribosyl)imidazole-4-carboxamido]succinate + ADP + phosphate + 2 H(+). It participates in purine metabolism; IMP biosynthesis via de novo pathway; 5-amino-1-(5-phospho-D-ribosyl)imidazole-4-carboxamide from 5-amino-1-(5-phospho-D-ribosyl)imidazole-4-carboxylate: step 1/2. The protein is Phosphoribosylaminoimidazole-succinocarboxamide synthase of Shewanella putrefaciens (strain CN-32 / ATCC BAA-453).